The primary structure comprises 530 residues: Lysine--tRNA ligase (530 aa).

The 'HIGH' region signature appears at 28–36 (PSGHIHVGN). Residues 278–282 (PMSSS) carry the 'KMSKS' region motif.

It belongs to the class-I aminoacyl-tRNA synthetase family.

It is found in the cytoplasm. The enzyme catalyses tRNA(Lys) + L-lysine + ATP = L-lysyl-tRNA(Lys) + AMP + diphosphate. In Methanocaldococcus jannaschii (strain ATCC 43067 / DSM 2661 / JAL-1 / JCM 10045 / NBRC 100440) (Methanococcus jannaschii), this protein is Lysine--tRNA ligase (lysS).